Reading from the N-terminus, the 103-residue chain is Small ribosomal subunit protein uS14c (103 aa).

This sequence belongs to the universal ribosomal protein uS14 family. In terms of assembly, part of the 30S ribosomal subunit.

The protein resides in the plastid. It localises to the chloroplast. Functionally, binds 16S rRNA, required for the assembly of 30S particles. The protein is Small ribosomal subunit protein uS14c of Lolium perenne (Perennial ryegrass).